The sequence spans 757 residues: uncharacterized protein (757 aa).

An S1 motif domain is found at 640–709 (GMILEGVVSN…ARKRIALTMR (70 aa)). Residues 711-741 (DDEPGGAKHKMPSENRSRERTAGRKPQRNDR) are compositionally biased toward basic and acidic residues. The disordered stretch occupies residues 711-757 (DDEPGGAKHKMPSENRSRERTAGRKPQRNDRAPANSAMADAFAKLKR).

This is an uncharacterized protein from Neisseria meningitidis serogroup B (strain ATCC BAA-335 / MC58).